A 109-amino-acid polypeptide reads, in one-letter code: MKVSAVLKNARVSAQKARLVADLIRGKSVEQALNTLTFTPKKSAVLMKKVLESAIANAEHNEGADIDTLKVATVYVDKGPSLKRFTARAKGRGNRIEKQTCHITLVVGN.

The protein belongs to the universal ribosomal protein uL22 family. In terms of assembly, part of the 50S ribosomal subunit.

This protein binds specifically to 23S rRNA; its binding is stimulated by other ribosomal proteins, e.g. L4, L17, and L20. It is important during the early stages of 50S assembly. It makes multiple contacts with different domains of the 23S rRNA in the assembled 50S subunit and ribosome. In terms of biological role, the globular domain of the protein is located near the polypeptide exit tunnel on the outside of the subunit, while an extended beta-hairpin is found that lines the wall of the exit tunnel in the center of the 70S ribosome. The sequence is that of Large ribosomal subunit protein uL22 from Laribacter hongkongensis (strain HLHK9).